The chain runs to 200 residues: Small ribosomal subunit protein eS8B (200 aa).

The disordered stretch occupies residues 1–41 (MGITRDSRHKRSATGAKRAQYRKKRKFELGRQPSNTRIGPK). S62 and S99 each carry phosphoserine. The disordered stretch occupies residues 124–145 (KGKKATATPTPKSKHVQRKHSA). A compositionally biased stretch (basic residues) spans 135-145 (KSKHVQRKHSA). A phosphoserine mark is found at S150, S154, and S171.

The protein belongs to the eukaryotic ribosomal protein eS8 family. In terms of assembly, component of the small ribosomal subunit (SSU). Mature yeast ribosomes consist of a small (40S) and a large (60S) subunit. The 40S small subunit contains 1 molecule of ribosomal RNA (18S rRNA) and at least 33 different proteins. The large 60S subunit contains 3 rRNA molecules (25S, 5.8S and 5S rRNA) and at least 46 different proteins.

It is found in the cytoplasm. Its function is as follows. Component of the ribosome, a large ribonucleoprotein complex responsible for the synthesis of proteins in the cell. The small ribosomal subunit (SSU) binds messenger RNAs (mRNAs) and translates the encoded message by selecting cognate aminoacyl-transfer RNA (tRNA) molecules. The large subunit (LSU) contains the ribosomal catalytic site termed the peptidyl transferase center (PTC), which catalyzes the formation of peptide bonds, thereby polymerizing the amino acids delivered by tRNAs into a polypeptide chain. The nascent polypeptides leave the ribosome through a tunnel in the LSU and interact with protein factors that function in enzymatic processing, targeting, and the membrane insertion of nascent chains at the exit of the ribosomal tunnel. This Schizosaccharomyces pombe (strain 972 / ATCC 24843) (Fission yeast) protein is Small ribosomal subunit protein eS8B (rps802).